The primary structure comprises 144 residues: 3-hydroxyacyl-[acyl-carrier-protein] dehydratase FabZ (144 aa).

Residue histidine 48 is part of the active site.

This sequence belongs to the thioester dehydratase family. FabZ subfamily.

Its subcellular location is the cytoplasm. It catalyses the reaction a (3R)-hydroxyacyl-[ACP] = a (2E)-enoyl-[ACP] + H2O. In terms of biological role, involved in unsaturated fatty acids biosynthesis. Catalyzes the dehydration of short chain beta-hydroxyacyl-ACPs and long chain saturated and unsaturated beta-hydroxyacyl-ACPs. This Bacillus pumilus (strain SAFR-032) protein is 3-hydroxyacyl-[acyl-carrier-protein] dehydratase FabZ.